The chain runs to 205 residues: Protein N-terminal glutamine amidohydrolase (205 aa).

Active-site residues include Cys-28, His-81, and Asp-97.

Belongs to the NTAQ1 family. As to quaternary structure, monomer.

It localises to the cytoplasm. It is found in the cytosol. The protein localises to the nucleus. It catalyses the reaction N-terminal L-glutaminyl-[protein] + H2O = N-terminal L-glutamyl-[protein] + NH4(+). In terms of biological role, mediates the side-chain deamidation of N-terminal glutamine residues to glutamate, an important step in N-end rule pathway of protein degradation. Conversion of the resulting N-terminal glutamine to glutamate renders the protein susceptible to arginylation, polyubiquitination and degradation as specified by the N-end rule. Does not act on substrates with internal or C-terminal glutamine and does not act on non-glutamine residues in any position. Does not deaminate acetylated N-terminal glutamine. With the exception of proline, all tested second-position residues on substrate peptides do not greatly influence the activity. In contrast, a proline at position 2, virtually abolishes deamidation of N-terminal glutamine. This chain is Protein N-terminal glutamine amidohydrolase, found in Homo sapiens (Human).